The sequence spans 395 residues: Nicotinate phosphoribosyltransferase (395 aa).

His-222 carries the phosphohistidine; by autocatalysis modification.

It belongs to the NAPRTase family. In terms of processing, transiently phosphorylated on a His residue during the reaction cycle. Phosphorylation strongly increases the affinity for substrates and increases the rate of nicotinate D-ribonucleotide production. Dephosphorylation regenerates the low-affinity form of the enzyme, leading to product release.

The enzyme catalyses nicotinate + 5-phospho-alpha-D-ribose 1-diphosphate + ATP + H2O = nicotinate beta-D-ribonucleotide + ADP + phosphate + diphosphate. It participates in cofactor biosynthesis; NAD(+) biosynthesis; nicotinate D-ribonucleotide from nicotinate: step 1/1. Catalyzes the synthesis of beta-nicotinate D-ribonucleotide from nicotinate and 5-phospho-D-ribose 1-phosphate at the expense of ATP. This chain is Nicotinate phosphoribosyltransferase, found in Polaromonas sp. (strain JS666 / ATCC BAA-500).